The following is a 684-amino-acid chain: Frizzled-8 (684 aa).

Positions 1-27 are cleaved as a signal peptide; it reads MEWGYLLEVTSLLAALAVLQRSSGAAA. At 28-271 the chain is on the extracellular side; the sequence is ASAKELACQE…NPFFSQDERA (244 aa). The 122-residue stretch at 30–151 folds into the FZ domain; the sequence is AKELACQEIT…GNPDTLCMDY (122 aa). Disulfide bonds link Cys-35–Cys-96, Cys-43–Cys-89, Cys-80–Cys-118, Cys-107–Cys-148, and Cys-111–Cys-135. Asn-49 is a glycosylation site (N-linked (GlcNAc...) asparagine). 71–78 contributes to the hexadecanoate binding site; that stretch reads QFWPLVEI. A wnt-binding region spans residues 95 to 100; the sequence is ICLEDY. A wnt-binding region spans residues 147-152; sequence LCMDYN. A glycan (N-linked (GlcNAc...) asparagine) is linked at Asn-152. Residues 155-222 are disordered; the sequence is DLTTAAPSPP…KARPPGGGAA (68 aa). Pro residues predominate over residues 161 to 175; it reads PSPPRRLPPPQPGEQ. Low complexity-rich tracts occupy residues 176–186 and 199–222; these read PPSGSGHSRPP and GSGD…GGAA. Residues 272 to 292 form a helical membrane-spanning segment; the sequence is FTVFWIGLWSVLCFVSTFATV. At 293–308 the chain is on the cytoplasmic side; it reads STFLIDMERFKYPERP. Residues 309–329 traverse the membrane as a helical segment; that stretch reads IIFLSACYLFVSVGYLVRLVA. Residues 330 to 393 are Extracellular-facing; sequence GHEKVACSGG…RYETTGPALC (64 aa). A helical membrane pass occupies residues 394–414; sequence TVVFLLVYFFGMASSIWWVIL. Residues 415 to 436 are Cytoplasmic-facing; that stretch reads SLTWFLAAGMKWGNEAIAGYSQ. Residues 437-457 traverse the membrane as a helical segment; sequence YFHLAAWLVPSVKSIAVLALS. Over 458–480 the chain is Extracellular; the sequence is SVDGDPVAGICYVGNQSLDNLRG. Asn-472 carries N-linked (GlcNAc...) asparagine glycosylation. The helical transmembrane segment at 481–501 threads the bilayer; it reads FVLAPLVIYLFIGTMFLLAGF. Residues 502–529 are Cytoplasmic-facing; sequence VSLFRIRSVIKQQGGPTKTHKLEKLMIR. The helical transmembrane segment at 530–550 threads the bilayer; that stretch reads LGLFTVLYTVPAAVVVACLFY. Topologically, residues 551–581 are extracellular; it reads EQHNRPRWEATHNCPCLRDLQPDQARRPDYA. A helical membrane pass occupies residues 582–602; it reads VFMLKYFMCLVVGITSGVWVW. Residues 603–684 are Cytoplasmic-facing; it reads SGKTLESWRA…YPKQMPLSQV (82 aa). Positions 605–610 match the Lys-Thr-X-X-X-Trp motif, mediates interaction with the PDZ domain of Dvl family members motif; the sequence is KTLESW. Residues 630–654 are compositionally biased toward gly residues; that stretch reads AGGSGPGGGGPGPGGGGGHGGGGGS. The tract at residues 630-655 is disordered; the sequence is AGGSGPGGGGPGPGGGGGHGGGGGSL. The PDZ-binding motif lies at 682-684; sequence SQV.

Belongs to the G-protein coupled receptor Fz/Smo family. As to quaternary structure, component of a Wnt-signaling complex that contains a WNT protein, a FZD protein and LRP5 or LRP6. Interacts directly with LRP5 or LRP6; the interaction is promoted by Wnt-binding and signaling and inhibited by DKK1. Interacts (via the PDZ-binding motif) with GPOC (via its PDZ domain). Interacts with RSPO1 and RSPO3. Interacts with glypican GPC3. Ubiquitinated by ZNRF3, leading to its degradation by the proteasome.

The protein localises to the membrane. Its subcellular location is the golgi apparatus. It is found in the cell membrane. Its function is as follows. Receptor for Wnt proteins. Component of the Wnt-Fzd-LRP5-LRP6 complex that triggers beta-catenin signaling through inducing aggregation of receptor-ligand complexes into ribosome-sized signalosomes. The beta-catenin canonical signaling pathway leads to the activation of disheveled proteins, inhibition of GSK-3 kinase, nuclear accumulation of beta-catenin and activation of Wnt target genes. A second signaling pathway involving PKC and calcium fluxes has been seen for some family members, but it is not yet clear if it represents a distinct pathway or if it can be integrated in the canonical pathway, as PKC seems to be required for Wnt-mediated inactivation of GSK-3 kinase. Both pathways seem to involve interactions with G-proteins. May be involved in transduction and intercellular transmission of polarity information during tissue morphogenesis and/or in differentiated tissues. Coreceptor along with RYK of Wnt proteins, such as WNT1. The chain is Frizzled-8 (Fzd8) from Rattus norvegicus (Rat).